The following is a 388-amino-acid chain: LL-diaminopimelate aminotransferase (388 aa).

Substrate-binding residues include Tyr16 and Gly41. Pyridoxal 5'-phosphate is bound by residues Tyr70, 104–105, Tyr129, Asn179, Tyr210, and 239–241; these read SK and SLS. Substrate-binding residues include Lys105, Tyr129, and Asn179. Lys242 is subject to N6-(pyridoxal phosphate)lysine. Residue Arg250 coordinates pyridoxal 5'-phosphate. Arg368 contacts substrate.

It belongs to the class-I pyridoxal-phosphate-dependent aminotransferase family. LL-diaminopimelate aminotransferase subfamily. As to quaternary structure, homodimer. Requires pyridoxal 5'-phosphate as cofactor.

The catalysed reaction is (2S,6S)-2,6-diaminopimelate + 2-oxoglutarate = (S)-2,3,4,5-tetrahydrodipicolinate + L-glutamate + H2O + H(+). The protein operates within amino-acid biosynthesis; L-lysine biosynthesis via DAP pathway; LL-2,6-diaminopimelate from (S)-tetrahydrodipicolinate (aminotransferase route): step 1/1. In terms of biological role, involved in the synthesis of meso-diaminopimelate (m-DAP or DL-DAP), required for both lysine and peptidoglycan biosynthesis. Catalyzes the direct conversion of tetrahydrodipicolinate to LL-diaminopimelate. In Nitratidesulfovibrio vulgaris (strain ATCC 29579 / DSM 644 / CCUG 34227 / NCIMB 8303 / VKM B-1760 / Hildenborough) (Desulfovibrio vulgaris), this protein is LL-diaminopimelate aminotransferase.